Consider the following 160-residue polypeptide: MTATKHKHPGVVAENRKARHDYDIEETIEAGIVLSGSEIKSVRAGRVNLRGSFARVIDDEVFLYDAHIAPYEQSGKYFNHDPMRPRKLLLHRREINRLNGLVRMKGMTLVPLKVYFKGRRAKVELGVARGKKIYDKREDIARRDAARDIDRALKRARHDL.

It belongs to the SmpB family.

Its subcellular location is the cytoplasm. In terms of biological role, required for rescue of stalled ribosomes mediated by trans-translation. Binds to transfer-messenger RNA (tmRNA), required for stable association of tmRNA with ribosomes. tmRNA and SmpB together mimic tRNA shape, replacing the anticodon stem-loop with SmpB. tmRNA is encoded by the ssrA gene; the 2 termini fold to resemble tRNA(Ala) and it encodes a 'tag peptide', a short internal open reading frame. During trans-translation Ala-aminoacylated tmRNA acts like a tRNA, entering the A-site of stalled ribosomes, displacing the stalled mRNA. The ribosome then switches to translate the ORF on the tmRNA; the nascent peptide is terminated with the 'tag peptide' encoded by the tmRNA and targeted for degradation. The ribosome is freed to recommence translation, which seems to be the essential function of trans-translation. The protein is SsrA-binding protein of Chloroflexus aurantiacus (strain ATCC 29364 / DSM 637 / Y-400-fl).